The sequence spans 114 residues: Nucleoid-associated protein CKL_3826 (114 aa).

This sequence belongs to the YbaB/EbfC family. In terms of assembly, homodimer.

The protein resides in the cytoplasm. It localises to the nucleoid. Binds to DNA and alters its conformation. May be involved in regulation of gene expression, nucleoid organization and DNA protection. This Clostridium kluyveri (strain ATCC 8527 / DSM 555 / NBRC 12016 / NCIMB 10680 / K1) protein is Nucleoid-associated protein CKL_3826.